The primary structure comprises 956 residues: MAM domain-containing glycosylphosphatidylinositol anchor protein 1 (956 aa).

A signal peptide spans 1–18; sequence MEVTCLLLLALIPFHCRG. 2 Ig-like domains span residues 24-123 and 132-230; these read PAQA…KSIR and PVLT…KAIT. N-linked (GlcNAc...) asparagine glycosylation is present at asparagine 42. Disulfide bonds link cysteine 60–cysteine 108 and cysteine 157–cysteine 214. Asparagine 235, asparagine 247, asparagine 257, and asparagine 307 each carry an N-linked (GlcNAc...) asparagine glycan. Ig-like domains lie at 240–323, 338–432, 440–532, and 539–650; these read PALK…KTVN, PDMI…IEVN, PTIS…AQVQ, and PEVE…PTRS. Intrachain disulfides connect cysteine 262/cysteine 308 and cysteine 357/cysteine 415. An N-linked (GlcNAc...) asparagine glycan is attached at asparagine 432. Cystine bridges form between cysteine 463–cysteine 514 and cysteine 560–cysteine 616. Residues 627–744 form the Fibronectin type-III domain; it reads CLFQVSAKAY…SRIIHYTEPI (118 aa). The 168-residue stretch at 752 to 919 folds into the MAM domain; sequence NTCHFEDEKI…VTLKKGECPR (168 aa). Over residues 780 to 789 the composition is skewed to polar residues; that stretch reads LTQNPKRSPN. The interval 780 to 799 is disordered; sequence LTQNPKRSPNTGPPTDISGT. The GPI-anchor amidated serine moiety is linked to residue serine 933. Positions 934–956 are cleaved as a propeptide — removed in mature form; the sequence is GAPRLSSLQLWGSMAIFLLALQR.

Interacts heterophilically through its MAM domain with proteins in axon-rich regions and through its Ig-like domains with proteins in differentiating muscle. Interacts (through the Ig-like domains) with NLGN2. Expressed by neurons in layers 2 and 3 of the cortex during their migration and settling in the cortical plate. Also found in layers 4 and 6a. From 9.5 dpc-13.5 dpc, detected in the marginal zone of the developing cortex. At 16.5 dpc, modest expression is found in the intermediate zone. At postnatal day 1, evident in the superficial cortical plate. By postnatal day 7, expression is limited to layers 2 and 3 throughout most of the cortex.

The protein resides in the cell membrane. Functionally, required for radial migration of cortical neurons in the superficial layer of the neocortex. Plays a role in the formation or maintenance of inhibitory synapses. May function by inhibiting the activity of NLGN2. This chain is MAM domain-containing glycosylphosphatidylinositol anchor protein 1, found in Mus musculus (Mouse).